The primary structure comprises 413 residues: MTTQFSVSGIELELFRYPSRQESNLQAWDAADEHLIKHLIDTEQTSISTAVVNDGFGALTAGLLSINPSWPLTLETDAKTSQLGTSQNLTRNQLSQESITWVNSRDELPQVIELVLMKLPKNLNYFSHQLNRLSHVLPAGTQVLIGAKAKSINKSLLETIEKNLGPASASLTWKKTRVITCIADGKARALPKATTWSVPEFKLQISNLSNVFAANKLDIGARIMLDNMPKGDYKSIVDLGCGNGILGLHAKQVFPEAYIHFIDDSEMAVASARENWALNKLDNPALVGEQATFGWDDCLTNMSEGFRPDLVLCNPPFHQGEAITDHIAWQMFLDAFRRLKNGGILHVVGNRHLAYHVKLQRIFKNCTTVASNGKFVILQAQKISKKAQEAEVEQAFDTETPHPQSALYGKPKA.

Residues 389–413 (EAEVEQAFDTETPHPQSALYGKPKA) are disordered.

It belongs to the methyltransferase superfamily. RlmG family.

It localises to the cytoplasm. It carries out the reaction guanosine(1835) in 23S rRNA + S-adenosyl-L-methionine = N(2)-methylguanosine(1835) in 23S rRNA + S-adenosyl-L-homocysteine + H(+). In terms of biological role, specifically methylates the guanine in position 1835 (m2G1835) of 23S rRNA. The polypeptide is Ribosomal RNA large subunit methyltransferase G (Shewanella pealeana (strain ATCC 700345 / ANG-SQ1)).